The following is a 313-amino-acid chain: Ribonuclease HIII (313 aa).

The region spanning 94 to 310 is the RNase H type-2 domain; the sequence is MSVIGSDEVG…TQKAKRLVER (217 aa). Asp100, Glu101, and Asp205 together coordinate a divalent metal cation.

The protein belongs to the RNase HII family. RnhC subfamily. Mn(2+) is required as a cofactor. Requires Mg(2+) as cofactor.

The protein localises to the cytoplasm. It catalyses the reaction Endonucleolytic cleavage to 5'-phosphomonoester.. In terms of biological role, endonuclease that specifically degrades the RNA of RNA-DNA hybrids. This is Ribonuclease HIII from Bacillus velezensis (strain DSM 23117 / BGSC 10A6 / LMG 26770 / FZB42) (Bacillus amyloliquefaciens subsp. plantarum).